Here is a 475-residue protein sequence, read N- to C-terminus: C3a anaphylatoxin chemotactic receptor (475 aa).

The Extracellular portion of the chain corresponds to 1-23 (MESSSAETNSTGLHLEPQYQPET). An N-linked (GlcNAc...) asparagine glycan is attached at asparagine 9. Residues 24 to 46 (ILAMAILGLTFVLGLPGNGLVLW) form a helical membrane-spanning segment. Residues 47–57 (VAGLKMRRTVN) lie on the Cytoplasmic side of the membrane. Residues 58-80 (TVWFLHLTVADFVCCLSLPFSMA) form a helical membrane-spanning segment. Residues 81–96 (HLALRGYWPYGEILCK) lie on the Extracellular side of the membrane. Cysteine 95 and cysteine 172 are disulfide-bonded. Residues 97-118 (FIPTVIIFNMFASVFLLTAISL) form a helical membrane-spanning segment. Over 119–139 (DRCLMVLKPIWCQNHRNVRTA) the chain is Cytoplasmic. Residues 140 to 160 (CIICGCIWLVAFVLCIPVFVY) form a helical membrane-spanning segment. Residues 161–331 (RETFTLENHT…RLLKVITFTR (171 aa)) lie on the Extracellular side of the membrane. Asparagine 168 carries an N-linked (GlcNAc...) asparagine glycan. 2 positions are modified to sulfotyrosine: tyrosine 174 and tyrosine 183. 2 N-linked (GlcNAc...) asparagine glycosylation sites follow: asparagine 273 and asparagine 292. The helical transmembrane segment at 332–351 (LVVGFLLPMIIMVACYTLII) threads the bilayer. At 352 to 368 (FRMRRVRVVKSWNKALH) the chain is on the cytoplasmic side. Residues 369–391 (LAMVVVTIFLICWAPYHVFGVLI) traverse the membrane as a helical segment. Topologically, residues 392-408 (LFINPESRVGAALLSWD) are extracellular. Residues 409–429 (HVSIALASANSCFNPFLYALL) form a helical membrane-spanning segment. At 430-475 (GRDLRKRVRQSMKGILEAAFSEDISKSTSFIQAKAFSEKHSLSTNV) the chain is on the cytoplasmic side. Position 450 is a phosphoserine (serine 450).

It belongs to the G-protein coupled receptor 1 family. As to quaternary structure, interacts with VGF-derived peptide TLQP-21. Expressed in the heart, kidney, lung, liver, peritoneal macrophages and spleen.

It localises to the cell membrane. Receptor for the chemotactic and inflammatory peptide anaphylatoxin C3a. This receptor stimulates chemotaxis, granule enzyme release and superoxide anion production. The polypeptide is C3a anaphylatoxin chemotactic receptor (C3AR1) (Cavia porcellus (Guinea pig)).